Here is an 81-residue protein sequence, read N- to C-terminus: Photosystem I iron-sulfur center (81 aa).

2 4Fe-4S ferredoxin-type domains span residues 1–31 (MSHT…MVPW) and 37–68 (GQIA…IRVY). Residues Cys-11, Cys-14, Cys-17, Cys-21, Cys-48, Cys-51, Cys-54, and Cys-58 each contribute to the [4Fe-4S] cluster site.

In terms of assembly, the cyanobacterial PSI reaction center is composed of one copy each of PsaA,B,C,D,E,F,I,J,K,L,M and X, and forms trimeric complexes. Requires [4Fe-4S] cluster as cofactor.

It localises to the cellular thylakoid membrane. It carries out the reaction reduced [plastocyanin] + hnu + oxidized [2Fe-2S]-[ferredoxin] = oxidized [plastocyanin] + reduced [2Fe-2S]-[ferredoxin]. In terms of biological role, apoprotein for the two 4Fe-4S centers FA and FB of photosystem I (PSI); essential for photochemical activity. FB is the terminal electron acceptor of PSI, donating electrons to ferredoxin. The C-terminus interacts with PsaA/B/D and helps assemble the protein into the PSI complex. Required for binding of PsaD and PsaE to PSI. PSI is a plastocyanin/cytochrome c6-ferredoxin oxidoreductase, converting photonic excitation into a charge separation, which transfers an electron from the donor P700 chlorophyll pair to the spectroscopically characterized acceptors A0, A1, FX, FA and FB in turn. The sequence is that of Photosystem I iron-sulfur center from Acaryochloris marina (strain MBIC 11017).